A 271-amino-acid polypeptide reads, in one-letter code: Phosphate import ATP-binding protein PstB 2 (271 aa).

The 242-residue stretch at 25–266 (MATEDLHVYY…PQQKQTEDYI (242 aa)) folds into the ABC transporter domain. 57-64 (GPSGCGKS) contributes to the ATP binding site.

Belongs to the ABC transporter superfamily. Phosphate importer (TC 3.A.1.7) family. As to quaternary structure, the complex is composed of two ATP-binding proteins (PstB), two transmembrane proteins (PstC and PstA) and a solute-binding protein (PstS).

It is found in the cell membrane. The enzyme catalyses phosphate(out) + ATP + H2O = ADP + 2 phosphate(in) + H(+). Its function is as follows. Part of the ABC transporter complex PstSACB involved in phosphate import. Responsible for energy coupling to the transport system. In Listeria monocytogenes serotype 4b (strain F2365), this protein is Phosphate import ATP-binding protein PstB 2.